A 120-amino-acid chain; its full sequence is Acyl carrier protein, mitochondrial (120 aa).

Residues 43–117 (KEITDRVIGV…ETISYLRKTP (75 aa)) form the Carrier domain. Residue Ser77 is modified to O-(pantetheine 4'-phosphoryl)serine.

It belongs to the acyl carrier protein (ACP) family. In terms of assembly, complex I is composed of about 45 different subunits. 4'-phosphopantetheine is transferred from CoA to a specific serine of apo-ACP by acpS. This modification is essential for activity because fatty acids are bound in thioester linkage to the sulfhydryl of the prosthetic group.

The protein localises to the mitochondrion. Its pathway is lipid metabolism; fatty acid biosynthesis. In terms of biological role, carrier of the growing fatty acid chain in fatty acid biosynthesis. May be involved in the synthesis of very-long-chain fatty acids. Accessory and non-catalytic subunit of the mitochondrial membrane respiratory chain NADH dehydrogenase (Complex I), which functions in the transfer of electrons from NADH to the respiratory chain. This is Acyl carrier protein, mitochondrial (ndufab1) from Dictyostelium discoideum (Social amoeba).